A 236-amino-acid polypeptide reads, in one-letter code: Pyridoxine 5'-phosphate synthase (236 aa).

Position 6 (asparagine 6) interacts with 3-amino-2-oxopropyl phosphate. A 1-deoxy-D-xylulose 5-phosphate-binding site is contributed by aspartate 8–histidine 9. Arginine 17 serves as a coordination point for 3-amino-2-oxopropyl phosphate. Histidine 42 serves as the catalytic Proton acceptor. Positions 44 and 49 each coordinate 1-deoxy-D-xylulose 5-phosphate. Glutamate 69 acts as the Proton acceptor in catalysis. A 1-deoxy-D-xylulose 5-phosphate-binding site is contributed by threonine 99. Histidine 190 acts as the Proton donor in catalysis. 3-amino-2-oxopropyl phosphate contacts are provided by residues glycine 191 and glycine 212 to histidine 213.

The protein belongs to the PNP synthase family. Homooctamer; tetramer of dimers.

It localises to the cytoplasm. It catalyses the reaction 3-amino-2-oxopropyl phosphate + 1-deoxy-D-xylulose 5-phosphate = pyridoxine 5'-phosphate + phosphate + 2 H2O + H(+). Its pathway is cofactor biosynthesis; pyridoxine 5'-phosphate biosynthesis; pyridoxine 5'-phosphate from D-erythrose 4-phosphate: step 5/5. In terms of biological role, catalyzes the complicated ring closure reaction between the two acyclic compounds 1-deoxy-D-xylulose-5-phosphate (DXP) and 3-amino-2-oxopropyl phosphate (1-amino-acetone-3-phosphate or AAP) to form pyridoxine 5'-phosphate (PNP) and inorganic phosphate. This chain is Pyridoxine 5'-phosphate synthase, found in Chlorobium phaeobacteroides (strain DSM 266 / SMG 266 / 2430).